A 256-amino-acid chain; its full sequence is Protein FixA (256 aa).

This sequence belongs to the ETF beta-subunit/FixA family. As to quaternary structure, heterodimer of FixA and FixB.

It functions in the pathway amine and polyamine metabolism; carnitine metabolism. Its function is as follows. Required for anaerobic carnitine reduction. May bring reductant to CaiA. This chain is Protein FixA, found in Escherichia fergusonii (strain ATCC 35469 / DSM 13698 / CCUG 18766 / IAM 14443 / JCM 21226 / LMG 7866 / NBRC 102419 / NCTC 12128 / CDC 0568-73).